We begin with the raw amino-acid sequence, 457 residues long: Acetylcholine receptor subunit alpha-1-B (457 aa).

An N-terminal signal peptide occupies residues 1–20; that stretch reads MDYTASCLIFLFIAAGTVFG. Topologically, residues 21–230 are extracellular; the sequence is TDHETRLIGD…ITYHFVLQRL (210 aa). 2 disulfide bridges follow: cysteine 148–cysteine 162 and cysteine 212–cysteine 213. An N-linked (GlcNAc...) asparagine glycan is attached at asparagine 161. A run of 3 helical transmembrane segments spans residues 231–255, 263–281, and 297–316; these read PLYFIVNVIIPCLLFSFLTGLVFYL, MTLSISVLLSLTVFLLVIV, and YMLFTMVFVIASIIITVIVI. Residues 317-428 lie on the Cytoplasmic side of the membrane; that stretch reads NTHHRSPSTH…WKFVAMVLDH (112 aa). Residues 429–447 traverse the membrane as a helical segment; sequence ILLAVFMTVCVIGTLAVFA.

It belongs to the ligand-gated ion channel (TC 1.A.9) family. Acetylcholine receptor (TC 1.A.9.1) subfamily. Alpha-1/CHRNA1 sub-subfamily. In terms of assembly, one of the alpha chains that assemble within the acetylcholine receptor, a pentamer of two alpha chains, a beta, a delta, and a gamma or epsilon chains.

It localises to the postsynaptic cell membrane. The protein resides in the cell membrane. It catalyses the reaction K(+)(in) = K(+)(out). The enzyme catalyses Na(+)(in) = Na(+)(out). Functionally, upon acetylcholine binding, the AChR responds by an extensive change in conformation that affects all subunits and leads to opening of an ion-conducting channel across the plasma membrane. This chain is Acetylcholine receptor subunit alpha-1-B (chrna1-b), found in Xenopus laevis (African clawed frog).